We begin with the raw amino-acid sequence, 112 residues long: UPF0145 protein MmarC6_1828 (112 aa).

Belongs to the UPF0145 family.

This is UPF0145 protein MmarC6_1828 from Methanococcus maripaludis (strain C6 / ATCC BAA-1332).